The chain runs to 526 residues: ATP synthase subunit alpha (526 aa).

Gly174–Thr181 provides a ligand contact to ATP. Positions Phe505–Glu520 are enriched in basic and acidic residues. The disordered stretch occupies residues Phe505–Gly526.

The protein belongs to the ATPase alpha/beta chains family. As to quaternary structure, F-type ATPases have 2 components, CF(1) - the catalytic core - and CF(0) - the membrane proton channel. CF(1) has five subunits: alpha(3), beta(3), gamma(1), delta(1), epsilon(1). CF(0) has three main subunits: a(1), b(2) and c(9-12). The alpha and beta chains form an alternating ring which encloses part of the gamma chain. CF(1) is attached to CF(0) by a central stalk formed by the gamma and epsilon chains, while a peripheral stalk is formed by the delta and b chains.

Its subcellular location is the cell membrane. It catalyses the reaction ATP + H2O + 4 H(+)(in) = ADP + phosphate + 5 H(+)(out). Produces ATP from ADP in the presence of a proton gradient across the membrane. The alpha chain is a regulatory subunit. The polypeptide is ATP synthase subunit alpha (Rubrobacter xylanophilus (strain DSM 9941 / JCM 11954 / NBRC 16129 / PRD-1)).